Here is a 474-residue protein sequence, read N- to C-terminus: ATP synthase subunit beta (474 aa).

Gly-151–Thr-158 contacts ATP.

This sequence belongs to the ATPase alpha/beta chains family. In terms of assembly, F-type ATPases have 2 components, CF(1) - the catalytic core - and CF(0) - the membrane proton channel. CF(1) has five subunits: alpha(3), beta(3), gamma(1), delta(1), epsilon(1). CF(0) has four main subunits: a(1), b(1), b'(1) and c(9-12).

It is found in the cell inner membrane. It catalyses the reaction ATP + H2O + 4 H(+)(in) = ADP + phosphate + 5 H(+)(out). Its function is as follows. Produces ATP from ADP in the presence of a proton gradient across the membrane. The catalytic sites are hosted primarily by the beta subunits. This chain is ATP synthase subunit beta, found in Jannaschia sp. (strain CCS1).